A 261-amino-acid chain; its full sequence is Hydroxyethylthiazole kinase (261 aa).

M40 is a substrate binding site. The ATP site is built by K116 and T162. G189 serves as a coordination point for substrate.

Belongs to the Thz kinase family. Mg(2+) is required as a cofactor.

It catalyses the reaction 5-(2-hydroxyethyl)-4-methylthiazole + ATP = 4-methyl-5-(2-phosphooxyethyl)-thiazole + ADP + H(+). Its pathway is cofactor biosynthesis; thiamine diphosphate biosynthesis; 4-methyl-5-(2-phosphoethyl)-thiazole from 5-(2-hydroxyethyl)-4-methylthiazole: step 1/1. Functionally, catalyzes the phosphorylation of the hydroxyl group of 4-methyl-5-beta-hydroxyethylthiazole (THZ). This chain is Hydroxyethylthiazole kinase, found in Methanosarcina acetivorans (strain ATCC 35395 / DSM 2834 / JCM 12185 / C2A).